Reading from the N-terminus, the 560-residue chain is Ubiquitin carboxyl-terminal hydrolase MINDY-3 homolog (560 aa).

The span at 1–13 (MNEKIVREQRGGE) shows a compositional bias: basic and acidic residues. Disordered stretches follow at residues 1–30 (MNEK…AASA) and 44–91 (SHKT…MLNA). Low complexity-rich tracts occupy residues 15 to 30 (SPSS…AASA) and 52 to 81 (TASS…SSSS). Cys139 serves as the catalytic Nucleophile. Residues 203 to 237 (TEAGSTKKRSPAGEEESALAGQAAGSSEEVEEAAE) form a disordered region. 2 positions are modified to phosphoserine: Ser212 and Ser219. The active-site Proton acceptor is His403.

This sequence belongs to the MINDY deubiquitinase family. FAM188 subfamily.

The enzyme catalyses Thiol-dependent hydrolysis of ester, thioester, amide, peptide and isopeptide bonds formed by the C-terminal Gly of ubiquitin (a 76-residue protein attached to proteins as an intracellular targeting signal).. In terms of biological role, hydrolase that can remove 'Lys-48'-linked conjugated ubiquitin from proteins. The polypeptide is Ubiquitin carboxyl-terminal hydrolase MINDY-3 homolog (mindy3) (Drosophila melanogaster (Fruit fly)).